A 393-amino-acid chain; its full sequence is Reticulon-like protein 2 (393 aa).

Residues M1–A21 are compositionally biased toward low complexity. Residues M1–A25 are disordered. Over M1–N60 the chain is Cytoplasmic. A Reticulon domain is found at K30–T236. A helical transmembrane segment spans residues V61 to L81. Topologically, residues S82–G149 are lumenal. Residue N137 is glycosylated (N-linked (GlcNAc...) asparagine). The helical transmembrane segment at L150–V170 threads the bilayer. The Cytoplasmic segment spans residues P171–A393. 2 disordered regions span residues I214–T313 and G339–A393. The span at D220–T285 shows a compositional bias: polar residues. Position 278 is a phosphoserine (S278). Over residues G289–T313 the composition is skewed to basic and acidic residues. Positions P365–N376 are enriched in polar residues. The segment covering K381–A393 has biased composition (basic residues).

It is found in the endoplasmic reticulum membrane. This is Reticulon-like protein 2 (RTN2) from Saccharomyces cerevisiae (strain ATCC 204508 / S288c) (Baker's yeast).